A 140-amino-acid chain; its full sequence is Putative pre-16S rRNA nuclease (140 aa).

This sequence belongs to the YqgF nuclease family.

It localises to the cytoplasm. In terms of biological role, could be a nuclease involved in processing of the 5'-end of pre-16S rRNA. This is Putative pre-16S rRNA nuclease from Endomicrobium trichonymphae.